The sequence spans 190 residues: Putative resolvase R771 (190 aa).

A DNA-binding region (H-T-H motif) is located at residues 11-30; the sequence is SSVLGVHQRTLYQWDKKGWI. A Resolvase/invertase-type recombinase catalytic domain is found at 61 to 190; that stretch reads LSICYVRVSS…RNGLKKYSNK (130 aa). Positions 66–92 form a coiled coil; it reads VRVSSNNQKDDLERQIKFMKKKYPNHT. Serine 69 serves as the catalytic O-(5'-phospho-DNA)-serine intermediate.

Belongs to the site-specific recombinase resolvase family.

Its function is as follows. Resolvase catalyzes the resolution (a site-specific recombination) of the cointegrated replicon to yield the final transposition products. This is Putative resolvase R771 from Acanthamoeba polyphaga (Amoeba).